The chain runs to 344 residues: MAQKENTYPWPYGRQTAQSGLNILPQRVLRKEAVTPSALVLMSRSNTQPTAAPGQKVVENSSGTPNFSTRSFTIDDFEIGRPLGKGKFGNVYLAREKKSHFIVALKVLFKSQIEKEGVEHQLRREIEIQAHLQHPNILRLYNYFYDRRRIYLILEYAPRGELYKELQKCRTFDEQRTATIMEELADALIYCHGKKVIHRDIKPENLLLGLQGELKIADFGWSVHAPSLRRKTMCGTLDYLPPEMIEGRTHNEKVDLWCIGVLCYELLVGNPPFESASHNETYRRIGKVDLKFPPSVPAGAQDLISKLLKHNPSDRLPLAQVSAHPWVRAHSRRVLPPSAPQSVP.

The residue at position 35 (Thr-35) is a Phosphothreonine. Ser-62 carries the post-translational modification Phosphoserine. Residue Thr-64 is modified to Phosphothreonine. The 251-residue stretch at 77–327 (FEIGRPLGKG…LAQVSAHPWV (251 aa)) folds into the Protein kinase domain. ATP is bound by residues 83–91 (LGKGKFGNV) and Lys-106. Asp-200 serves as the catalytic Proton acceptor. Lys-215 bears the N6-acetyllysine mark. Ser-227 is modified (phosphoserine). Residue Thr-232 is modified to Phosphothreonine; by autocatalysis.

This sequence belongs to the protein kinase superfamily. Ser/Thr protein kinase family. Aurora subfamily. As to quaternary structure, component of the chromosomal passenger complex (CPC) composed of at least BIRC5/survivin, CDCA8/borealin, INCENP, AURKB or AURKC; predominantly independent AURKB- and AURKC-containing complexes exist. Associates with RACGAP1 during M phase. Interacts with SPDYC; this interaction may be required for proper localization of active, Thr-232-phosphorylated AURKB form during prometaphase and metaphase. Interacts with p53/TP53. Interacts (via the middle kinase domain) with NOC2L (via the N- and C-terminus domains). Interacts with CDCA1. Interacts with EVI5. Interacts with JTB. Interacts with NDC80. Interacts with PSMA3. Interacts with RNF2/RING1B. Interacts with SEPTIN1. Interacts with SIRT2. Interacts with TACC1. Interacts with TTC28. Post-translationally, the phosphorylation of Thr-232 requires the binding to INCENP and occurs by means of an autophosphorylation mechanism. Thr-232 phosphorylation is indispensable for the AURKB kinase activity. In terms of processing, acetylated at Lys-215 by KAT5 at kinetochores, increasing AURKB activity and promoting accurate chromosome segregation in mitosis. Ubiquitinated by different BCR (BTB-CUL3-RBX1) E3 ubiquitin ligase complexes. Ubiquitinated by the BCR(KLHL9-KLHL13) E3 ubiquitin ligase complex, ubiquitination leads to removal from mitotic chromosomes and is required for cytokinesis. During anaphase, the BCR(KLHL21) E3 ubiquitin ligase complex recruits the CPC complex from chromosomes to the spindle midzone and mediates the ubiquitination of AURKB. Ubiquitination of AURKB by BCR(KLHL21) E3 ubiquitin ligase complex may not lead to its degradation by the proteasome. Deubiquitinated by USP35; inhibiting CDH1-mediated degradation of AURKB.

It is found in the nucleus. Its subcellular location is the chromosome. The protein resides in the centromere. It localises to the kinetochore. The protein localises to the cytoplasm. It is found in the cytoskeleton. Its subcellular location is the spindle. The protein resides in the midbody. The catalysed reaction is L-seryl-[protein] + ATP = O-phospho-L-seryl-[protein] + ADP + H(+). It catalyses the reaction L-threonyl-[protein] + ATP = O-phospho-L-threonyl-[protein] + ADP + H(+). With respect to regulation, activity is greatly increased when AURKB is within the CPC complex. In particular, AURKB-phosphorylated INCENP acts as an activator of AURKB. Positive feedback between HASPIN and AURKB contributes to CPC localization. Functionally, serine/threonine-protein kinase component of the chromosomal passenger complex (CPC), a complex that acts as a key regulator of mitosis. The CPC complex has essential functions at the centromere in ensuring correct chromosome alignment and segregation and is required for chromatin-induced microtubule stabilization and spindle assembly. Involved in the bipolar attachment of spindle microtubules to kinetochores and is a key regulator for the onset of cytokinesis during mitosis. Required for central/midzone spindle assembly and cleavage furrow formation. Key component of the cytokinesis checkpoint, a process required to delay abscission to prevent both premature resolution of intercellular chromosome bridges and accumulation of DNA damage: phosphorylates CHMP4C, leading to retain abscission-competent VPS4 (VPS4A and/or VPS4B) at the midbody ring until abscission checkpoint signaling is terminated at late cytokinesis. AURKB phosphorylates the CPC complex subunits BIRC5/survivin, CDCA8/borealin and INCENP. Phosphorylation of INCENP leads to increased AURKB activity. Other known AURKB substrates involved in centromeric functions and mitosis are CENPA, DES/desmin, GPAF, KIF2C, NSUN2, RACGAP1, SEPTIN1, VIM/vimentin, HASPIN, and histone H3. A positive feedback loop involving HASPIN and AURKB contributes to localization of CPC to centromeres. Phosphorylation of VIM controls vimentin filament segregation in cytokinetic process, whereas histone H3 is phosphorylated at 'Ser-10' and 'Ser-28' during mitosis (H3S10ph and H3S28ph, respectively). AURKB is also required for kinetochore localization of BUB1 and SGO1. Phosphorylation of p53/TP53 negatively regulates its transcriptional activity. Key regulator of active promoters in resting B- and T-lymphocytes: acts by mediating phosphorylation of H3S28ph at active promoters in resting B-cells, inhibiting RNF2/RING1B-mediated ubiquitination of histone H2A and enhancing binding and activity of the USP16 deubiquitinase at transcribed genes. Acts as an inhibitor of CGAS during mitosis: catalyzes phosphorylation of the N-terminus of CGAS during the G2-M transition, blocking CGAS liquid phase separation and activation, and thereby preventing CGAS-induced autoimmunity. Phosphorylates KRT5 during anaphase and telophase. Phosphorylates ATXN10 which promotes phosphorylation of ATXN10 by PLK1 and may play a role in the regulation of cytokinesis and stimulating the proteasomal degradation of ATXN10. This is Aurora kinase B (AURKB) from Sus scrofa (Pig).